The sequence spans 202 residues: Small ribosomal subunit protein uS4c (202 aa).

Residues 90–152 (MRLDNVIFRL…RKSESIINKN (63 aa)) enclose the S4 RNA-binding domain.

It belongs to the universal ribosomal protein uS4 family. Part of the 30S ribosomal subunit. Contacts protein S5. The interaction surface between S4 and S5 is involved in control of translational fidelity.

It is found in the plastid. The protein resides in the chloroplast. One of the primary rRNA binding proteins, it binds directly to 16S rRNA where it nucleates assembly of the body of the 30S subunit. In terms of biological role, with S5 and S12 plays an important role in translational accuracy. The polypeptide is Small ribosomal subunit protein uS4c (rps4) (Dendrohypopterygium filiculiforme (Moss)).